The primary structure comprises 691 residues: Zinc finger protein 770 (691 aa).

Residue Lys-11 forms a Glycyl lysine isopeptide (Lys-Gly) (interchain with G-Cter in SUMO2) linkage. 3 consecutive C2H2-type zinc fingers follow at residues 27–49 (YVCN…YLIH), 55–77 (FECD…QLTH), and 81–103 (FKCS…QQLH). Glycyl lysine isopeptide (Lys-Gly) (interchain with G-Cter in SUMO2) cross-links involve residues Lys-112, Lys-121, and Lys-146. C2H2-type zinc fingers lie at residues 160 to 182 (HACT…VLIH), 188 to 210 (FKCV…QLTH), and 216 to 238 (FQCC…KQIH). The interval 258–277 (PLPNKLNANQGGFENGEIGE) is disordered. Residue Lys-262 forms a Glycyl lysine isopeptide (Lys-Gly) (interchain with G-Cter in SUMO2) linkage. The C2H2-type 7; degenerate zinc finger occupies 294–318 (FQCPKCEKCFESEQILNEHSCFAAR). Residues Lys-420 and Lys-437 each participate in a glycyl lysine isopeptide (Lys-Gly) (interchain with G-Cter in SUMO2) cross-link. C2H2-type zinc fingers lie at residues 475–497 (CPCD…YLIH), 503–525 (FGCN…EQTH), 625–647 (YRCS…YLIH), and 653–675 (FECS…QLTH). A Glycyl lysine isopeptide (Lys-Gly) (interchain with G-Cter in SUMO2) cross-link involves residue Lys-683.

This sequence belongs to the krueppel C2H2-type zinc-finger protein family.

It localises to the nucleus. May be involved in transcriptional regulation. The sequence is that of Zinc finger protein 770 (ZNF770) from Homo sapiens (Human).